The sequence spans 139 residues: Hydrogenase maturation factor HypA (139 aa).

Histidine 2 is a binding site for Ni(2+). Zn(2+)-binding residues include cysteine 73, cysteine 76, cysteine 110, and cysteine 113.

Belongs to the HypA/HybF family.

Involved in the maturation of [NiFe] hydrogenases. Required for nickel insertion into the metal center of the hydrogenase. The chain is Hydrogenase maturation factor HypA from Pyrococcus horikoshii (strain ATCC 700860 / DSM 12428 / JCM 9974 / NBRC 100139 / OT-3).